The sequence spans 905 residues: Microtubule-associated protein 10 (905 aa).

Disordered stretches follow at residues 30 to 51, 199 to 235, 329 to 362, 434 to 458, 547 to 586, 721 to 772, and 786 to 855; these read AAAV…SSPR, TRTG…KPLG, APEE…AHEH, SPES…GGCE, SSAE…FDEP, RSFK…GSPV, and KSLE…SSYL. Residues 34–43 show a composition bias toward acidic residues; that stretch reads EQEEEEEEKE. Positions 208 to 227 are enriched in low complexity; it reads SPQTQQERQQLQQPASQPSP. Basic and acidic residues predominate over residues 443 to 453; that stretch reads CRSEAKKDKRS. Polar residues predominate over residues 567–579; it reads ASFTENSDTSRQI. Positions 721–736 are enriched in basic and acidic residues; it reads RSFKAHDSSSRTENPK. The segment covering 737 to 748 has biased composition (polar residues); it reads HSQYTSKSSDTG. Low complexity predominate over residues 790–801; it reads EASSISASDLSS. Residues 830–855 show a composition bias toward polar residues; sequence SVKTRSSWKSLEKSQSPQTSQVSSYL.

As to quaternary structure, interacts (via middle region) with microtubules. In terms of tissue distribution, expressed in different cell lines (at protein level).

Its subcellular location is the cytoplasm. The protein resides in the cytoskeleton. It is found in the spindle pole. The protein localises to the microtubule organizing center. It localises to the centrosome. Its subcellular location is the midbody. Its function is as follows. Microtubule-associated protein (MAP) that plays a role in the regulation of cell division; promotes microtubule stability and participates in the organization of the spindle midzone and normal progress of cytokinesis. This Homo sapiens (Human) protein is Microtubule-associated protein 10 (MAP10).